A 199-amino-acid polypeptide reads, in one-letter code: Casparian strip membrane protein 2 (199 aa).

The Cytoplasmic portion of the chain corresponds to Met-1 to Gly-37. A helical transmembrane segment spans residues Ile-38–Ala-58. Topologically, residues Ser-59–Gln-87 are extracellular. A helical transmembrane segment spans residues Phe-88–Ile-108. Over Val-109–Arg-120 the chain is Cytoplasmic. Residues Leu-121–Ala-141 form a helical membrane-spanning segment. The Extracellular portion of the chain corresponds to Ala-142–Gly-173. Residue Asn-152 is glycosylated (N-linked (GlcNAc...) asparagine). A helical membrane pass occupies residues Ala-174–Phe-194. The Cytoplasmic portion of the chain corresponds to Ala-195 to His-199.

The protein belongs to the Casparian strip membrane proteins (CASP) family. Homodimer and heterodimers.

The protein resides in the cell membrane. Its function is as follows. Regulates membrane-cell wall junctions and localized cell wall deposition. Required for establishment of the Casparian strip membrane domain (CSD) and the subsequent formation of Casparian strips, a cell wall modification of the root endodermis that determines an apoplastic barrier between the intraorganismal apoplasm and the extraorganismal apoplasm and prevents lateral diffusion. This is Casparian strip membrane protein 2 from Populus trichocarpa (Western balsam poplar).